Reading from the N-terminus, the 149-residue chain is Deoxyuridine 5'-triphosphate nucleotidohydrolase (149 aa).

Residues 68 to 70 (RSG), asparagine 81, 85 to 87 (TVD), and lysine 95 each bind substrate.

It belongs to the dUTPase family. Mg(2+) is required as a cofactor.

The enzyme catalyses dUTP + H2O = dUMP + diphosphate + H(+). Its pathway is pyrimidine metabolism; dUMP biosynthesis; dUMP from dCTP (dUTP route): step 2/2. This enzyme is involved in nucleotide metabolism: it produces dUMP, the immediate precursor of thymidine nucleotides and it decreases the intracellular concentration of dUTP so that uracil cannot be incorporated into DNA. This chain is Deoxyuridine 5'-triphosphate nucleotidohydrolase, found in Neorickettsia sennetsu (strain ATCC VR-367 / Miyayama) (Ehrlichia sennetsu).